The chain runs to 774 residues: DNA ligase 3 (774 aa).

The disordered stretch occupies residues M1–N25. Residue K433 is the N6-AMP-lysine intermediate of the active site.

The protein belongs to the ATP-dependent DNA ligase family.

It is found in the nucleus. The enzyme catalyses ATP + (deoxyribonucleotide)n-3'-hydroxyl + 5'-phospho-(deoxyribonucleotide)m = (deoxyribonucleotide)n+m + AMP + diphosphate.. This is DNA ligase 3 (adl1) from Schizosaccharomyces pombe (strain 972 / ATCC 24843) (Fission yeast).